The following is a 119-amino-acid chain: Probable non-functional T cell receptor gamma variable 10 (119 aa).

The signal sequence occupies residues 1 to 19; it reads MSLLEAFAFSSWALGLGLS. The Ig-like domain occupies 24-119; sequence FQLSISTEVK…MAVYYCAAWD (96 aa). Cysteine 40 and cysteine 115 are oxidised to a cystine.

As to quaternary structure, gamma-delta TR is a heterodimer composed of a gamma and delta chain; disulfide-linked. The gamma-delta TR is associated with the transmembrane signaling CD3 coreceptor proteins following the stoichiometry: a single gamma-delta TR heterodimer associates with one CD3D-CD3E heterodimer, one CD3G-CD3E heterodimer and one CD247 homodimer forming a stable octameric structure. Upon activation, gamma-delta TR complex associates with FCER1G to initiate intracellular signaling.

It is found in the cell membrane. Functionally, probable non-functional open reading frame (ORF) of V region of the variable domain of T cell receptor (TR) gamma chain. Non-functional ORF generally cannot participate in the synthesis of a productive T cell receptor (TR) chain due to altered V-(D)-J or switch recombination and/or splicing site (at mRNA level) and/or conserved amino acid change (protein level). Gamma-delta TRs recognize a variety of self and foreign non-peptide antigens frequently expressed at the epithelial boundaries between the host and external environment, including endogenous lipids presented by MH-like protein CD1D and phosphoantigens presented by butyrophilin-like molecule BTN3A1. Upon antigen recognition induces rapid, innate-like immune responses involved in pathogen clearance and tissue repair. Binding of gamma-delta TR complex to antigen triggers phosphorylation of immunoreceptor tyrosine-based activation motifs (ITAMs) in the CD3 chains by the LCK and FYN kinases, allowing the recruitment, phosphorylation, and activation of ZAP70 that facilitates phosphorylation of the scaffolding proteins LCP2 and LAT. This lead to the formation of a supramolecular signalosome that recruits the phospholipase PLCG1, resulting in calcium mobilization and ERK activation, ultimately leading to T cell expansion and differentiation into effector cells. Gamma-delta TRs are produced through somatic rearrangement of a limited repertoire of variable (V), diversity (D), and joining (J) genes. The potential diversity of gamma-delta TRs is conferred by the unique ability to rearrange (D) genes in tandem and to utilize all three reading frames. The combinatorial diversity is considerably increased by the sequence exonuclease trimming and random nucleotide (N) region additions which occur during the V-(D)-J rearrangements. In Homo sapiens (Human), this protein is Probable non-functional T cell receptor gamma variable 10.